The chain runs to 375 residues: UPF0612 protein C569.003 (375 aa).

Belongs to the UPF0612 family.

The protein localises to the cytoplasm. In Schizosaccharomyces pombe (strain 972 / ATCC 24843) (Fission yeast), this protein is UPF0612 protein C569.003.